We begin with the raw amino-acid sequence, 1907 residues long: Chromatin modification-related protein EAF1 B (1907 aa).

Disordered regions lie at residues 108–208 (ASPH…TDLV), 261–287 (NRVS…GSKT), 323–373 (GGSP…SHAN), and 449–469 (NQSH…ETEK). Residues 140 to 151 (SENKSVEGERNL) show a composition bias toward basic and acidic residues. Polar residues-rich tracts occupy residues 261-270 (NRVSSNSLNT), 333-342 (GQKNSSTQLN), and 355-372 (TNRG…SSHA). Residues 563-641 (CGTAPVEVRE…LSYAILQFWS (79 aa)) enclose the HSA domain. 2 disordered regions span residues 836-909 (SSSL…AVQK) and 928-952 (AETS…TWHL). A compositionally biased stretch (basic residues) spans 856-866 (RRVRTASRHRV). Polar residues-rich tracts occupy residues 884 to 898 (TDAS…QDEY) and 942 to 952 (QGSAYDQTWHL). The SANT domain maps to 1049 to 1105 (SGNPWSLFEDQALVVLVHDMGPNWELISDAMNSTLKIKYIYRNPTECKDRHKILMDK). Disordered regions lie at residues 1107–1131 (AGDG…PGIP), 1235–1266 (PVLP…GLQS), 1296–1319 (LSGR…DRGH), 1429–1465 (GHLS…QQEA), 1477–1594 (YLQQ…QQLN), 1638–1703 (VRPD…SPAT), 1767–1791 (VPQS…QASN), and 1824–1907 (VNNS…TKVE). Composition is skewed to polar residues over residues 1116–1125 (DSGNSQSYPS), 1242–1266 (AHPS…GLQS), 1296–1310 (LSGR…STPA), 1431–1444 (LSQQ…SHVL), and 1453–1462 (QSPSQATGAQ). The span at 1493-1512 (PHVQQPQGSSVSSSSQNSPQ) shows a compositional bias: low complexity. Pro residues predominate over residues 1513 to 1529 (TQPPVSPQPLSMPPVSP). 8 stretches are compositionally biased toward polar residues: residues 1532 to 1545 (NINA…QKSQ), 1554 to 1568 (SPQS…QAGK), 1585 to 1594 (RQPTQGQQLN), 1640 to 1655 (PDQQ…TDLQ), 1662 to 1672 (PLSSNHSQQLP), 1681 to 1703 (PSPQ…SPAT), 1769 to 1782 (QSVT…SMGT), and 1824 to 1844 (VNNS…NQGL). Composition is skewed to basic and acidic residues over residues 1863–1872 (SEEKRPKLPE) and 1882–1892 (LASEEQPHLEE).

Belongs to the EAF1 family. Component of the NuA4 histone acetyltransferase complex. Interacts with ARP4 and SWC4, and (via HSA domain) with TAF14 and TAF14B. In terms of tissue distribution, expressed in leaves.

It is found in the nucleus. In terms of biological role, component of the NuA4 histone acetyltransferase complex which is involved in transcriptional activation of selected genes principally by acetylation of nucleosomal histone H4 and H2A. The polypeptide is Chromatin modification-related protein EAF1 B (EAF1B) (Arabidopsis thaliana (Mouse-ear cress)).